Consider the following 321-residue polypeptide: Basic peroxidase (321 aa).

An N-terminal signal peptide occupies residues 1–30 (MSYHKSSGTTLMVPLFMLLISVNYFMSCNA). Position 31 is a pyrrolidone carboxylic acid (Q31). Disulfide bonds link C41–C117, C74–C79, C123–C317, and C202–C228. Catalysis depends on H72, which acts as the Proton acceptor. 5 residues coordinate Ca(2+): D73, V76, G78, D80, and S82. P165 contacts substrate. H195 contributes to the heme b binding site. T196 contributes to the Ca(2+) binding site. 2 N-linked (GlcNAc...) asparagine glycosylation sites follow: N211 and N221. Positions 241, 244, and 249 each coordinate Ca(2+).

This sequence belongs to the peroxidase family. Classical plant (class III) peroxidase subfamily. Heme b is required as a cofactor. The cofactor is Ca(2+). In terms of processing, N-glycosylated. Expressed in tracheary elements, roots, young and old hypocotyls, and stems in the partially glycosylated form and in roots and young hypocotyls in the fully glycosylated form. None of the isoforms is significantly expressed in leaves or cotyledons.

It localises to the secreted. The catalysed reaction is 2 a phenolic donor + H2O2 = 2 a phenolic radical donor + 2 H2O. Its function is as follows. Removal of H(2)O(2), oxidation of toxic reductants, biosynthesis and degradation of lignin, suberization, auxin catabolism, response to environmental stresses such as wounding, pathogen attack and oxidative stress. These functions might be dependent on each isozyme/isoform in each plant tissue. Involved in the synthesis of highly polymerized lignins. The protein is Basic peroxidase (POD3) of Zinnia elegans (Garden zinnia).